Consider the following 293-residue polypeptide: Small ribosomal subunit biogenesis GTPase RsgA (293 aa).

The 161-residue stretch at 63–223 folds into the CP-type G domain; it reads KNELVRPPIA…VADTPGFSSL (161 aa). GTP is bound by residues 112-115 and 166-174; these read SKMD and GQSGVGKSS. Zn(2+) is bound by residues Cys247, Cys252, His254, and Cys260.

The protein belongs to the TRAFAC class YlqF/YawG GTPase family. RsgA subfamily. Monomer. Associates with 30S ribosomal subunit, binds 16S rRNA. It depends on Zn(2+) as a cofactor.

It localises to the cytoplasm. Functionally, one of several proteins that assist in the late maturation steps of the functional core of the 30S ribosomal subunit. Helps release RbfA from mature subunits. May play a role in the assembly of ribosomal proteins into the subunit. Circularly permuted GTPase that catalyzes slow GTP hydrolysis, GTPase activity is stimulated by the 30S ribosomal subunit. This Bacillus cereus (strain ATCC 10987 / NRS 248) protein is Small ribosomal subunit biogenesis GTPase RsgA.